The primary structure comprises 298 residues: Putative enoyl-CoA reductase (298 aa).

4 consecutive transmembrane segments (helical) span residues 162 to 182 (CVYY…PYYT), 189 to 209 (LVNA…AVHV), 229 to 249 (ILFS…WVAF), and 254 to 274 (SMLT…EWAV).

This sequence belongs to the steroid 5-alpha reductase family.

It localises to the membrane. It functions in the pathway lipid metabolism; fatty acid biosynthesis. In terms of biological role, involved in the synthesis of fatty acids. This is Putative enoyl-CoA reductase from Trypanosoma brucei brucei (strain 927/4 GUTat10.1).